We begin with the raw amino-acid sequence, 278 residues long: 2,5-diketo-D-gluconic acid reductase A (278 aa).

Residue Y50 is the Proton donor of the active site. H108 serves as a coordination point for substrate. 188-242 provides a ligand contact to NADP(+); sequence GPLGQGKYDLFGAEPVTAAAAAHGKTPAQAVLRWHLQKGFVVFPKSVRRERLEEN. The tract at residues 259–278 is disordered; sequence DAMDPGDGSGRVSAHPDEVD.

Belongs to the aldo/keto reductase family. Monomer.

The protein resides in the cytoplasm. The catalysed reaction is 2-dehydro-L-idonate + NADP(+) = 2,5-didehydro-D-gluconate + NADPH + H(+). Inhibited by Zn(2+), Fe(3+), Cu(2+) and Ni(2+). Functionally, catalyzes the reduction of 2,5-diketo-D-gluconic acid (25DKG) to 2-keto-L-gulonic acid (2KLG). 5-keto-D-fructose and dihydroxyacetone can also serve as substrates. 25DKGR-A exhibits a greater selectivity for the substrate and higher thermal stability than 25DKGR-B. In Corynebacterium sp. (strain ATCC 31090), this protein is 2,5-diketo-D-gluconic acid reductase A (dkgA).